A 223-amino-acid polypeptide reads, in one-letter code: Endonuclease NucS (223 aa).

The protein belongs to the NucS endonuclease family.

It is found in the cytoplasm. In terms of biological role, cleaves both 3' and 5' ssDNA extremities of branched DNA structures. The chain is Endonuclease NucS from Mycobacterium sp. (strain JLS).